Reading from the N-terminus, the 83-residue chain is Cytochrome b559 subunit alpha (83 aa).

A helical membrane pass occupies residues 21 to 35 (VIHSITIPSLFIAGW). His23 is a binding site for heme.

It belongs to the PsbE/PsbF family. Heterodimer of an alpha subunit and a beta subunit. PSII is composed of 1 copy each of membrane proteins PsbA, PsbB, PsbC, PsbD, PsbE, PsbF, PsbH, PsbI, PsbJ, PsbK, PsbL, PsbM, PsbT, PsbX, PsbY, PsbZ, Psb30/Ycf12, at least 3 peripheral proteins of the oxygen-evolving complex and a large number of cofactors. It forms dimeric complexes. Requires heme b as cofactor.

The protein localises to the plastid. It localises to the chloroplast thylakoid membrane. In terms of biological role, this b-type cytochrome is tightly associated with the reaction center of photosystem II (PSII). PSII is a light-driven water:plastoquinone oxidoreductase that uses light energy to abstract electrons from H(2)O, generating O(2) and a proton gradient subsequently used for ATP formation. It consists of a core antenna complex that captures photons, and an electron transfer chain that converts photonic excitation into a charge separation. This Marchantia polymorpha (Common liverwort) protein is Cytochrome b559 subunit alpha.